Consider the following 567-residue polypeptide: 25S rRNA (cytosine-C(5))-methyltransferase NSUN5 (567 aa).

The segment covering M1–F17 has biased composition (basic residues). The tract at residues M1 to F88 is disordered. S-adenosyl-L-methionine contacts are provided by residues C312–K318, E336, D363, and D383. The active-site Nucleophile is C444.

This sequence belongs to the class I-like SAM-binding methyltransferase superfamily. RsmB/NOP family.

It carries out the reaction a cytidine in 25S rRNA + S-adenosyl-L-methionine = a 5-methylcytidine in 25S rRNA + S-adenosyl-L-homocysteine + H(+). Its function is as follows. S-adenosyl-L-methionine-dependent methyltransferase that specifically methylates the C(5) position of cytosine 2268 (m5C2268) in 25S rRNA. This chain is 25S rRNA (cytosine-C(5))-methyltransferase NSUN5, found in Arabidopsis thaliana (Mouse-ear cress).